Here is a 308-residue protein sequence, read N- to C-terminus: UDP-N-acetylenolpyruvoylglucosamine reductase (308 aa).

The 164-residue stretch at 22–185 (RVGGPADWLF…VEAAFRADAG (164 aa)) folds into the FAD-binding PCMH-type domain. Residue arginine 165 is part of the active site. A compositionally biased stretch (basic and acidic residues) spans 197–211 (QIARRDSSQPTRDRS). Residues 197 to 228 (QIARRDSSQPTRDRSAGSTFRNPAGFSSTGRA) are disordered. Positions 212–226 (AGSTFRNPAGFSSTG) are enriched in polar residues. The active-site Proton donor is serine 214. Glutamate 296 is an active-site residue.

Belongs to the MurB family. FAD serves as cofactor.

It localises to the cytoplasm. The catalysed reaction is UDP-N-acetyl-alpha-D-muramate + NADP(+) = UDP-N-acetyl-3-O-(1-carboxyvinyl)-alpha-D-glucosamine + NADPH + H(+). Its pathway is cell wall biogenesis; peptidoglycan biosynthesis. Its function is as follows. Cell wall formation. This is UDP-N-acetylenolpyruvoylglucosamine reductase from Cereibacter sphaeroides (strain ATCC 17025 / ATH 2.4.3) (Rhodobacter sphaeroides).